The following is a 1001-amino-acid chain: MEAAHSKSTEECLAYFGVSETTGLTPDQVKRHLEKYGHNELPAEEGKSLWELVIEQFEDLLVRILLLAACISFVLAWFEEGEETITAFVEPFVILLILIANAIVGVWQERNAENAIEALKEYEPEMGKVYRADRKSVQRIKARDIVPGDIVEVAVGDKVPADIRILSIKSTTLRVDQSILTGESVSVIKHTEPVPDPRAVNQDKKNMLFSGTNIAAGKALGIVATTGVSTEIGKIRDQMAATEQDKTPLQQKLDEFGEQLSKVISLICVAVWLINIGHFNDPVHGGSWIRGAIYYFKIAVALAVAAIPEGLPAVITTCLALGTRRMAKKNAIVRSLPSVETLGCTSVICSDKTGTLTTNQMSVCKMFIIDKVDGDFCSLNEFSITGSTYAPEGEVLKNDKPIRSGQFDGLVELATICALCNDSSLDFNETKGVYEKVGEATETALTTLVEKMNVFNTEVRNLSKVERANACNSVIRQLMKKEFTLEFSRDRKSMSVYCSPAKSSRAAVGNKMFVKGAPEGVIDRCNYVRVGTTRVPMTGPVKEKILSVIKEWGTGRDTLRCLALATRDTPPKREEMVLDDSSRFMEYETDLTFVGVVGMLDPPRKEVMGSIQLCRDAGIRVIMITGDNKGTAIAICRRIGIFGENEEVADRAYTGREFDDLPLAEQREACRRACCFARVEPSHKSKIVEYLQSYDEITAMTGDGVNDAPALKKAEIGIAMGSGTAVAKTASEMVLADDNFSTIVAAVEEGRAIYNNMKQFIRYLISSNVGEVVCIFLTAALGLPEALIPVQLLWVNLVTDGLPATALGFNPPDLDIMDRPPRSPKEPLISGWLFFRYMAIGGYVGAATVGAAAWWFMYAEDGPGVTYHQLTHFMQCTEDHPHFEGLDCEIFEAPEPMTMALSVLVTIEMCNALNSLSENQSLMRMPPWVNIWLLGSICLSMSLHFLILYVDPLPMIFKLKALDLTQWLMVLKISLPVIGLDEILKFIARNYLEDPEDERRK.

Topologically, residues 1–48 are cytoplasmic; sequence MEAAHSKSTEECLAYFGVSETTGLTPDQVKRHLEKYGHNELPAEEGKS. Residues 49-69 traverse the membrane as a helical segment; the sequence is LWELVIEQFEDLLVRILLLAA. Topologically, residues 70–89 are lumenal; it reads CISFVLAWFEEGEETITAFV. A helical membrane pass occupies residues 90–110; the sequence is EPFVILLILIANAIVGVWQER. The Cytoplasmic segment spans residues 111–253; the sequence is NAENAIEALK…QDKTPLQQKL (143 aa). Residues 254-273 form a helical membrane-spanning segment; the sequence is DEFGEQLSKVISLICVAVWL. Residues 274–295 lie on the Lumenal side of the membrane; the sequence is INIGHFNDPVHGGSWIRGAIYY. The chain crosses the membrane as a helical span at residues 296–313; it reads FKIAVALAVAAIPEGLPA. Val-304, Ala-305, Ile-307, and Glu-309 together coordinate Ca(2+). Residues 314 to 757 are Cytoplasmic-facing; sequence VITTCLALGT…EEGRAIYNNM (444 aa). Asp-351 serves as the catalytic 4-aspartylphosphate intermediate. 2 residues coordinate Mg(2+): Asp-351 and Thr-353. Residue Thr-353 coordinates ATP. A Phosphothreonine modification is found at Thr-441. Residues Glu-442, Arg-489, Lys-515, and Arg-560 each coordinate ATP. Thr-569 bears the Phosphothreonine mark. Position 581 is a phosphoserine (Ser-581). ATP is bound by residues Thr-625, Gly-626, Asp-627, Arg-678, and Lys-684. Asp-703 serves as a coordination point for Mg(2+). ATP is bound at residue Asn-706. The chain crosses the membrane as a helical span at residues 758–777; it reads KQFIRYLISSNVGEVVCIFL. 2 residues coordinate Ca(2+): Asn-768 and Glu-771. Residues 778 to 787 lie on the Lumenal side of the membrane; sequence TAALGLPEAL. The chain crosses the membrane as a helical span at residues 788-808; the sequence is IPVQLLWVNLVTDGLPATALG. The segment at 788-808 is interaction with PLN; that stretch reads IPVQLLWVNLVTDGLPATALG. 3 residues coordinate Ca(2+): Asn-796, Thr-799, and Asp-800. Residues 809–828 are Cytoplasmic-facing; the sequence is FNPPDLDIMDRPPRSPKEPL. The chain crosses the membrane as a helical span at residues 829-851; it reads ISGWLFFRYMAIGGYVGAATVGA. The Lumenal portion of the chain corresponds to 852–897; the sequence is AAWWFMYAEDGPGVTYHQLTHFMQCTEDHPHFEGLDCEIFEAPEPM. A disulfide bridge links Cys-876 with Cys-888. The helical transmembrane segment at 898–917 threads the bilayer; sequence TMALSVLVTIEMCNALNSLS. Glu-908 is a Ca(2+) binding site. At 918–930 the chain is on the cytoplasmic side; sequence ENQSLMRMPPWVN. Residues 931 to 949 form a helical membrane-spanning segment; sequence IWLLGSICLSMSLHFLILY. Residues 932–943 are interaction with PLN; that stretch reads WLLGSICLSMSL. Residues 950-964 lie on the Lumenal side of the membrane; that stretch reads VDPLPMIFKLKALDL. The helical transmembrane segment at 965–985 threads the bilayer; that stretch reads TQWLMVLKISLPVIGLDEILK. At 986-1001 the chain is on the cytoplasmic side; it reads FIARNYLEDPEDERRK.

Belongs to the cation transport ATPase (P-type) (TC 3.A.3) family. Type IIA subfamily. Interacts with sarcolipin (SLN). Interacts with phospholamban (PLN). Interacts with myoregulin (MRLN). Interacts with DWORF. Interacts with VMP1. Mg(2+) serves as cofactor. In terms of tissue distribution, skeletal muscle (at protein level). Skeletal muscle, fast twitch muscle (type II) fibers.

Its subcellular location is the endoplasmic reticulum membrane. The protein localises to the sarcoplasmic reticulum membrane. It carries out the reaction Ca(2+)(in) + ATP + H2O = Ca(2+)(out) + ADP + phosphate + H(+). With respect to regulation, inhibited by sarcolipin (SLN) and myoregulin (MRLN). Has also been shown to be reversibly inhibited by phospholamban (PLN) at low calcium concentrations in vitro. Dephosphorylated PLN decreases the apparent affinity of the ATPase for calcium and this inhibition is regulated by the phosphorylation of PLN in vitro. Enhanced by DWORF; DWORF increases activity by displacing sarcolipin (SLN), phospholamban (PLN) and myoregulin (MRLN). Key regulator of striated muscle performance by acting as the major Ca(2+) ATPase responsible for the reuptake of cytosolic Ca(2+) into the sarcoplasmic reticulum. Catalyzes the hydrolysis of ATP coupled with the translocation of calcium from the cytosol to the sarcoplasmic reticulum lumen. Contributes to calcium sequestration involved in muscular excitation/contraction. The chain is Sarcoplasmic/endoplasmic reticulum calcium ATPase 1 (ATP2A1) from Oryctolagus cuniculus (Rabbit).